A 3567-amino-acid polypeptide reads, in one-letter code: Zinc finger homeobox protein 4 (3567 aa).

Position 1 is an N-acetylmethionine (M1). 4 disordered regions span residues 1–54 (METC…LKTD), 425–480 (LSHS…AYSN), 522–545 (TSSSSATVSDDTEKKKQTAAVRAS), and 565–611 (SKDS…SPGS). Polar residues predominate over residues 9–28 (ISRQENGQSTSKLCGTTQLD). Composition is skewed to basic and acidic residues over residues 39 to 54 (EPDRENSSTDDNLKTD) and 434 to 452 (KMSESKDQENNCERPKESN). Residues 468 to 480 (EPGDEDEEDAYSN) are compositionally biased toward acidic residues. 3 consecutive C2H2-type zinc fingers follow at residues 613–636 (IECPKCDTVLGSSRSLGGHMTMMH), 644–667 (LKCPKCNWHYKYQQTLEAHMKEKH), and 699–723 (FRCEVCNYSTTTKGNLSIHMQSDKH). The C2H2-type 4; degenerate zinc finger occupies 767 to 789 (WRCEVCDYETNVARNLRIHMTSE). C2H2-type zinc fingers lie at residues 917–941 (YQCKLCNYNTQLKANFQLHCKTDKH), 973–995 (LKCNACDYYTNSVDKLRLHTTNH), and 1021–1045 (YYCAVCDYTTKVKLNLVQHVRSVKH). Residues 1098–1160 (EQHEEAEGAI…EDVATKRSKP (63 aa)) form a disordered region. 2 stretches are compositionally biased toward basic and acidic residues: residues 1120–1132 (TSERDNSEGKNSN) and 1148–1160 (AKEEDVATKRSKP). K1149 is covalently cross-linked (Glycyl lysine isopeptide (Lys-Gly) (interchain with G-Cter in SUMO2)). 2 C2H2-type zinc fingers span residues 1172–1195 (YQCPYCNYNSRDQSRIQMHVLSQH) and 1201–1224 (ICCPLCQDVLSNKMHLQLHLTHLH). The segment at 1254–1324 (AASEKSERDT…WNKNSSKDVK (71 aa)) is disordered. Positions 1281–1310 (MDDKSMAGLEDSKANVEVKNEEQKPTKEPL) are enriched in basic and acidic residues. Glycyl lysine isopeptide (Lys-Gly) (interchain with G-Cter in SUMO2) cross-links involve residues K1299 and K1324. 2 C2H2-type zinc fingers span residues 1352 to 1374 (YRCNHCSLAFKTMQKLQIHSQYH) and 1380 to 1403 (TMCNLCQRSFRTFQALKKHLEAGH). Positions 1429 to 1480 (ETMSQDDHGLEQEMEREYEVDHEGKASPVGSDSSSIPDDMGSEPKRTLPFRK) are disordered. The segment covering 1433–1453 (QDDHGLEQEMEREYEVDHEGK) has biased composition (basic and acidic residues). Residues 1496–1522 (YKCTVCKESFTQKNILLVHYNSVSHLH) form a C2H2-type 12 zinc finger. A Glycyl lysine isopeptide (Lys-Gly) (interchain with G-Cter in SUMO2) cross-link involves residue K1546. The segment at 1548–1572 (YKCSICNVAYSQSSTLEIHMRSVLH) adopts a C2H2-type 13 zinc-finger fold. Composition is skewed to low complexity over residues 1761 to 1772 (TQPQLQPQKQQQ) and 1779 to 1791 (QQQQQQASKLLKQ). Disordered stretches follow at residues 1761 to 1791 (TQPQLQPQKQQQQPPPPQQQQQQQASKLLKQ) and 1809 to 1858 (SYKE…IASG). K1790 is covalently cross-linked (Glycyl lysine isopeptide (Lys-Gly) (interchain with G-Cter in SUMO2)). The span at 1809-1845 (SYKEAEDISEKPEKPKQEFISEGEGLKEGKDTKKQKS) shows a compositional bias: basic and acidic residues. The segment at 1901–1924 (LECGTCGKLFSNVLILKSHQEHVH) adopts a C2H2-type 14 zinc-finger fold. The interval 1948–2024 (YPISPSSPET…PPSAPPQVQL (77 aa)) is disordered. Composition is skewed to pro residues over residues 1955 to 1974 (PETPPPPPPPPPLPPAPPQP) and 1991 to 2019 (QAPPPTPPPPPPPPPPPPPPPPPPPPSAP). 2 DNA-binding regions (homeobox) span residues 2084 to 2143 (FKRP…RQRN) and 2181 to 2240 (KRSS…RKSY). The C2H2-type 15; degenerate zinc-finger motif lies at 2267–2291 (YQCKKCNVVFPRIFDLITHQKKQCY). Disordered regions lie at residues 2289 to 2311 (QCYKDEDDDAQDESQTEDSMDAT) and 2328 to 2431 (AKNA…SPLQ). Residues 2293-2309 (DEDDDAQDESQTEDSMD) show a composition bias toward acidic residues. Residues 2331-2345 (AAAPAASSGSGTSTP) are compositionally biased toward low complexity. The span at 2352-2370 (PEPEKTSPKPEYPAEKPKQ) shows a compositional bias: basic and acidic residues. A compositionally biased stretch (polar residues) spans 2419 to 2431 (SASQTPVPSSPLQ). The C2H2-type 16 zinc finger occupies 2448–2470 (YQCDQCTVAFPTLELWQEHQHMH). Positions 2507 to 2530 (LGSSLTQMPPQASSSHTTAPTTVA) are enriched in polar residues. Residues 2507–2564 (LGSSLTQMPPQASSSHTTAPTTVAASLKRKLDDKEDNNCSEKEGGNSGEDQHRDKRLR) are disordered. A compositionally biased stretch (basic and acidic residues) spans 2535-2559 (RKLDDKEDNNCSEKEGGNSGEDQHR). The homeobox 3 DNA-binding region spans 2560–2619 (DKRLRTTITPEQLEILYEKYLLDSNPTRKMLDHIAREVGLKKRVVQVWFQNTRARERKGQ). A C2H2-type 17 zinc finger spans residues 2630-2653 (KRCPFCRALFKAKSALESHIRSRH). S2663 is modified (phosphoserine). Over residues 2764–2785 (AISDATTGDEGNTEMESTTGSS) the composition is skewed to polar residues. Disordered regions lie at residues 2764 to 2811 (AISD…TTPT) and 2829 to 2885 (HFND…PGHK). Positions 2830-2839 (FNDKDGDHDQ) are enriched in basic and acidic residues. Residues 2862 to 2874 (PSSPNPFGSSNPF) show a composition bias toward low complexity. The homeobox 4 DNA-binding region spans 2884–2943 (HKRFRTQMSNLQLKVLKACFSDYRTPTMQECEMLGNEIGLPKRVVQVWFQNARAKEKKFK). A C2H2-type 18 zinc finger spans residues 2962–2986 (PECTLCGVKYSARLSIRDHIFSKQH). Residues 3092–3110 (SATSSPALSLSSAPTKPLL) show a composition bias toward low complexity. Disordered stretches follow at residues 3092–3172 (SATS…KEEK) and 3281–3337 (LQKQ…LESK). Pro residues predominate over residues 3111 to 3125 (QTPPPPPPPPPPPPS). Residues 3126–3135 (SSLSGQQTEQ) are compositionally biased toward polar residues. Residues 3153–3172 (IKEEELEATKPEKHPKKEEK) are compositionally biased toward basic and acidic residues. K3154 participates in a covalent cross-link: Glycyl lysine isopeptide (Lys-Gly) (interchain with G-Cter in SUMO2). Residues 3265–3294 (ALLQQYQQYQQNLQESLQKQQKQQQEQQQK) adopt a coiled-coil conformation. The segment covering 3281–3293 (LQKQQKQQQEQQQ) has biased composition (low complexity). The segment covering 3294-3314 (KPVQAKTSKVESDQPQNSNDA) has biased composition (polar residues). Residues 3315-3337 (SETKEDKSTATESTKEEPQLESK) show a composition bias toward basic and acidic residues. Residues 3354-3378 (FICRKCQMMFTDEDAAVNHQKSFCY) form a C2H2-type 19; degenerate zinc finger. The C2H2-type 20 zinc-finger motif lies at 3398–3422 (YQCLACDVAISGNEALSQHLQSSLH). Disordered regions lie at residues 3443-3462 (HSVCSPNPNTTSTSQSAASS) and 3511-3534 (STSGVQTSLPTESCSDESDSELSQ). Low complexity predominate over residues 3447-3462 (SPNPNTTSTSQSAASS).

The protein belongs to the krueppel C2H2-type zinc-finger protein family. Expressed in brain, skeletal muscle and liver. Very low expression in stomach.

The protein resides in the nucleus. Functionally, may play a role in neural and muscle differentiation. May be involved in transcriptional regulation. The protein is Zinc finger homeobox protein 4 (ZFHX4) of Homo sapiens (Human).